Here is a 141-residue protein sequence, read N- to C-terminus: MAIERTLSIIKPDAVAKNVIGQIYSRFENAGLKIVASRMVHLSRADAEKFYAVHAARPFFKDLVEFMISGPVQVQVLEGEGAILKNRDLMGATDPKKAEKGTIRADFADSIDANAVHGSDAPETAAVEVAFFFPEVNVYSR.

ATP-binding residues include Lys11, Phe59, Arg87, Thr93, Arg104, and Asn114. His117 serves as the catalytic Pros-phosphohistidine intermediate.

It belongs to the NDK family. In terms of assembly, homotetramer. Requires Mg(2+) as cofactor.

It localises to the cytoplasm. It carries out the reaction a 2'-deoxyribonucleoside 5'-diphosphate + ATP = a 2'-deoxyribonucleoside 5'-triphosphate + ADP. The enzyme catalyses a ribonucleoside 5'-diphosphate + ATP = a ribonucleoside 5'-triphosphate + ADP. Functionally, major role in the synthesis of nucleoside triphosphates other than ATP. The ATP gamma phosphate is transferred to the NDP beta phosphate via a ping-pong mechanism, using a phosphorylated active-site intermediate. The polypeptide is Nucleoside diphosphate kinase (Paraburkholderia phymatum (strain DSM 17167 / CIP 108236 / LMG 21445 / STM815) (Burkholderia phymatum)).